Here is a 217-residue protein sequence, read N- to C-terminus: Probable transaldolase (217 aa).

K83 functions as the Schiff-base intermediate with substrate in the catalytic mechanism.

Belongs to the transaldolase family. Type 3B subfamily.

It localises to the cytoplasm. It catalyses the reaction D-sedoheptulose 7-phosphate + D-glyceraldehyde 3-phosphate = D-erythrose 4-phosphate + beta-D-fructose 6-phosphate. It functions in the pathway carbohydrate degradation; pentose phosphate pathway; D-glyceraldehyde 3-phosphate and beta-D-fructose 6-phosphate from D-ribose 5-phosphate and D-xylulose 5-phosphate (non-oxidative stage): step 2/3. In terms of biological role, transaldolase is important for the balance of metabolites in the pentose-phosphate pathway. This Ruegeria sp. (strain TM1040) (Silicibacter sp.) protein is Probable transaldolase.